Reading from the N-terminus, the 332-residue chain is Mitochondrial glycine transporter (332 aa).

Solcar repeat units follow at residues 11-94 (SSSY…LRQN), 121-205 (LSNL…LKKR), and 235-319 (TSAS…LIRR). The next 6 helical transmembrane spans lie at 17–42 (FGAG…TRVQ), 69–95 (GTVP…RQNV), 127–152 (LTTG…VRYE), 180–203 (GFGA…EELK), 239–265 (INFG…KTRI), and 294–312 (GLGL…AWTI).

Belongs to the mitochondrial carrier (TC 2.A.29) family. SLC25A38 subfamily.

It is found in the mitochondrion inner membrane. The enzyme catalyses glycine(in) = glycine(out). Its function is as follows. Mitochondrial glycine transporter that imports glycine into the mitochondrial matrix. Plays an important role in providing glycine for the first enzymatic step in heme biosynthesis, the condensation of glycine with succinyl-CoA to produce 5-aminolevulinate (ALA) in the mitochondrial matrix. The polypeptide is Mitochondrial glycine transporter (Botryotinia fuckeliana (strain B05.10) (Noble rot fungus)).